Consider the following 420-residue polypeptide: Trophoblast glycoprotein (420 aa).

The signal sequence occupies residues 1 to 34 (MPGGCSRGPAAGDGRLRLARLALVLLGWVSSSSS). The Extracellular segment spans residues 35 to 355 (TSSASSSSSS…PILPPSLQTS (321 aa)). In terms of domain architecture, LRRNT spans 53-91 (SAQPPLPDQCPALCECSEAARTVKCVNRNLTEVPTDLPL). Intrachain disulfides connect Cys-62–Cys-68 and Cys-66–Cys-77. The N-linked (GlcNAc...) asparagine glycan is linked to Asn-81. LRR repeat units lie at residues 92–113 (YVRN…AFAR), 116–139 (PLAE…GAFE), 141–163 (LPSL…FAFS), 172–204 (PSPL…AALV), 209–232 (LQGL…VLAQ), 233–255 (LPSL…VSFR), and 256–275 (NLTH…VLHN). A glycan (N-linked (GlcNAc...) asparagine) is linked at Asn-124. Asn-275 is a glycosylation site (N-linked (GlcNAc...) asparagine). The 64-residue stretch at 283-346 (GLPHVRVFLD…LNSADLDCDP (64 aa)) folds into the LRRCT domain. 2 disulfide bridges follow: Cys-298–Cys-323 and Cys-300–Cys-344. The helical transmembrane segment at 356-376 (YVFLGIVLALIGAIFLLVLYL) threads the bilayer. Over 377-420 (NRKGIKKWMHNIRDACRDHMEGYHYRYEINADPRLTNLSSNSDV) the chain is Cytoplasmic. Ser-418 is subject to Phosphoserine.

Highly glycosylated.

It localises to the cell membrane. In terms of biological role, may function as an inhibitor of Wnt/beta-catenin signaling by indirectly interacting with LRP6 and blocking Wnt3a-dependent LRP6 internalization. The polypeptide is Trophoblast glycoprotein (TPBG) (Macaca fascicularis (Crab-eating macaque)).